Here is a 346-residue protein sequence, read N- to C-terminus: Centromere protein L (346 aa).

Ser41 is modified (phosphoserine). A Phosphothreonine modification is found at Thr45. The residue at position 55 (Ser55) is a Phosphoserine.

The protein belongs to the CENP-L/IML3 family. As to quaternary structure, component of the CENPA-CAD complex, composed of CENPI, CENPK, CENPL, CENPO, CENPP, CENPQ, CENPR and CENPS. The CENPA-CAD complex interacts with the CENPA-NAC complex, at least composed of CENPA, CENPC, CENPH, CENPM, CENPN, CENPT and CENPU.

It is found in the nucleus. The protein resides in the chromosome. Its subcellular location is the centromere. Functionally, component of the CENPA-CAD (nucleosome distal) complex, a complex recruited to centromeres which is involved in assembly of kinetochore proteins, mitotic progression and chromosome segregation. May be involved in incorporation of newly synthesized CENPA into centromeres via its interaction with the CENPA-NAC complex. In Bos taurus (Bovine), this protein is Centromere protein L (CENPL).